A 453-amino-acid chain; its full sequence is Bifunctional protein GlmU (453 aa).

The tract at residues 1–225 is pyrophosphorylase; that stretch reads MNIVILAAGT…EWETLGVNSK (225 aa). Residues 6–9, lysine 20, glutamine 71, 76–77, 98–100, glycine 135, glutamate 150, asparagine 165, and asparagine 223 contribute to the UDP-N-acetyl-alpha-D-glucosamine site; these read LAAG, GT, and YGD. Position 100 (aspartate 100) interacts with Mg(2+). Residue asparagine 223 coordinates Mg(2+). The segment at 226-246 is linker; it reads AQLAELERIHQRNVADALLAD. An N-acetyltransferase region spans residues 247-453; sequence GVTLADPARI…GYVRPVKKKS (207 aa). UDP-N-acetyl-alpha-D-glucosamine contacts are provided by arginine 329 and lysine 347. Histidine 359 serves as the catalytic Proton acceptor. The UDP-N-acetyl-alpha-D-glucosamine site is built by tyrosine 362 and asparagine 373. Acetyl-CoA contacts are provided by residues alanine 376, 382–383, serine 401, and alanine 419; that span reads NY.

It in the N-terminal section; belongs to the N-acetylglucosamine-1-phosphate uridyltransferase family. In the C-terminal section; belongs to the transferase hexapeptide repeat family. Homotrimer. Mg(2+) serves as cofactor.

The protein resides in the cytoplasm. It carries out the reaction alpha-D-glucosamine 1-phosphate + acetyl-CoA = N-acetyl-alpha-D-glucosamine 1-phosphate + CoA + H(+). It catalyses the reaction N-acetyl-alpha-D-glucosamine 1-phosphate + UTP + H(+) = UDP-N-acetyl-alpha-D-glucosamine + diphosphate. It participates in nucleotide-sugar biosynthesis; UDP-N-acetyl-alpha-D-glucosamine biosynthesis; N-acetyl-alpha-D-glucosamine 1-phosphate from alpha-D-glucosamine 6-phosphate (route II): step 2/2. It functions in the pathway nucleotide-sugar biosynthesis; UDP-N-acetyl-alpha-D-glucosamine biosynthesis; UDP-N-acetyl-alpha-D-glucosamine from N-acetyl-alpha-D-glucosamine 1-phosphate: step 1/1. Its pathway is bacterial outer membrane biogenesis; LPS lipid A biosynthesis. Catalyzes the last two sequential reactions in the de novo biosynthetic pathway for UDP-N-acetylglucosamine (UDP-GlcNAc). The C-terminal domain catalyzes the transfer of acetyl group from acetyl coenzyme A to glucosamine-1-phosphate (GlcN-1-P) to produce N-acetylglucosamine-1-phosphate (GlcNAc-1-P), which is converted into UDP-GlcNAc by the transfer of uridine 5-monophosphate (from uridine 5-triphosphate), a reaction catalyzed by the N-terminal domain. The protein is Bifunctional protein GlmU of Burkholderia multivorans (strain ATCC 17616 / 249).